A 342-amino-acid chain; its full sequence is N-acetyl-gamma-glutamyl-phosphate reductase (342 aa).

C149 is an active-site residue.

The protein belongs to the NAGSA dehydrogenase family. Type 1 subfamily.

The protein resides in the cytoplasm. It carries out the reaction N-acetyl-L-glutamate 5-semialdehyde + phosphate + NADP(+) = N-acetyl-L-glutamyl 5-phosphate + NADPH + H(+). It participates in amino-acid biosynthesis; L-arginine biosynthesis; N(2)-acetyl-L-ornithine from L-glutamate: step 3/4. In terms of biological role, catalyzes the NADPH-dependent reduction of N-acetyl-5-glutamyl phosphate to yield N-acetyl-L-glutamate 5-semialdehyde. This Nitrosomonas europaea (strain ATCC 19718 / CIP 103999 / KCTC 2705 / NBRC 14298) protein is N-acetyl-gamma-glutamyl-phosphate reductase.